The sequence spans 431 residues: Glutamate-1-semialdehyde 2,1-aminomutase (431 aa).

At Lys-267 the chain carries N6-(pyridoxal phosphate)lysine.

Belongs to the class-III pyridoxal-phosphate-dependent aminotransferase family. HemL subfamily. Homodimer. Pyridoxal 5'-phosphate is required as a cofactor.

The protein resides in the cytoplasm. It carries out the reaction (S)-4-amino-5-oxopentanoate = 5-aminolevulinate. It functions in the pathway porphyrin-containing compound metabolism; protoporphyrin-IX biosynthesis; 5-aminolevulinate from L-glutamyl-tRNA(Glu): step 2/2. The chain is Glutamate-1-semialdehyde 2,1-aminomutase from Myxococcus xanthus (strain DK1622).